A 79-amino-acid polypeptide reads, in one-letter code: Sulfur carrier protein TusA (79 aa).

Catalysis depends on Cys-17, which acts as the Cysteine persulfide intermediate.

This sequence belongs to the sulfur carrier protein TusA family.

Its subcellular location is the cytoplasm. Sulfur carrier protein which probably makes part of a sulfur-relay system. This chain is Sulfur carrier protein TusA, found in Haemophilus influenzae (strain 86-028NP).